The primary structure comprises 298 residues: Acetylglutamate kinase (298 aa).

Substrate-binding positions include 69–70 (GG), R91, and N191.

The protein belongs to the acetylglutamate kinase family. ArgB subfamily.

The protein localises to the cytoplasm. It catalyses the reaction N-acetyl-L-glutamate + ATP = N-acetyl-L-glutamyl 5-phosphate + ADP. It participates in amino-acid biosynthesis; L-arginine biosynthesis; N(2)-acetyl-L-ornithine from L-glutamate: step 2/4. Catalyzes the ATP-dependent phosphorylation of N-acetyl-L-glutamate. The polypeptide is Acetylglutamate kinase (Neisseria meningitidis serogroup C / serotype 2a (strain ATCC 700532 / DSM 15464 / FAM18)).